The chain runs to 71 residues: Phosphatidylinositol N-acetylglucosaminyltransferase subunit Y (71 aa).

The Cytoplasmic portion of the chain corresponds to 1-3 (MFL). The helical transmembrane segment at 4 to 26 (SLPMLTVLIPLVSLAGLFYSASV) threads the bilayer. Residues 27–44 (EDDFPQGCTSTTSLCFYS) are Lumenal-facing. Residues 45 to 65 (LLLPITIPVYVFFHLWTWMGI) form a helical membrane-spanning segment. Over 66-71 (KLFRHN) the chain is Cytoplasmic.

In terms of assembly, component of the glycosylphosphatidylinositol-N-acetylglucosaminyltransferase (GPI-GnT) complex composed at least by PIGA, PIGC, PIGH, PIGP, PIGQ, PIGY and DPM2. Interacts directly with PIGA; this interaction regulates glycosylphosphatidylinositol-N-acetylglucosaminyltransferase activity. Does not interact with Ras proteins.

The protein resides in the endoplasmic reticulum membrane. The protein operates within glycolipid biosynthesis; glycosylphosphatidylinositol-anchor biosynthesis. In terms of biological role, part of the glycosylphosphatidylinositol-N-acetylglucosaminyltransferase (GPI-GnT) complex that catalyzes the transfer of N-acetylglucosamine from UDP-N-acetylglucosamine to phosphatidylinositol and participates in the first step of GPI biosynthesis. May act by regulating the catalytic subunit PIGA. This Bos taurus (Bovine) protein is Phosphatidylinositol N-acetylglucosaminyltransferase subunit Y.